The sequence spans 300 residues: Eukaryotic translation initiation factor 3 subunit F (300 aa).

The region spanning 33–169 (VKVHPVALFS…VQCYVSALLG (137 aa)) is the MPN domain.

The protein belongs to the eIF-3 subunit F family. As to quaternary structure, component of the eukaryotic translation initiation factor 3 (eIF-3) complex.

The protein resides in the cytoplasm. Component of the eukaryotic translation initiation factor 3 (eIF-3) complex, which is involved in protein synthesis of a specialized repertoire of mRNAs and, together with other initiation factors, stimulates binding of mRNA and methionyl-tRNAi to the 40S ribosome. The eIF-3 complex specifically targets and initiates translation of a subset of mRNAs involved in cell proliferation. This chain is Eukaryotic translation initiation factor 3 subunit F, found in Malassezia globosa (strain ATCC MYA-4612 / CBS 7966) (Dandruff-associated fungus).